The chain runs to 169 residues: Peptide deformylase (169 aa).

Residues C91 and H133 each contribute to the Fe cation site. E134 is an active-site residue. H137 lines the Fe cation pocket.

It belongs to the polypeptide deformylase family. Fe(2+) is required as a cofactor.

The catalysed reaction is N-terminal N-formyl-L-methionyl-[peptide] + H2O = N-terminal L-methionyl-[peptide] + formate. Removes the formyl group from the N-terminal Met of newly synthesized proteins. Requires at least a dipeptide for an efficient rate of reaction. N-terminal L-methionine is a prerequisite for activity but the enzyme has broad specificity at other positions. The polypeptide is Peptide deformylase (Escherichia coli (strain SMS-3-5 / SECEC)).